A 509-amino-acid polypeptide reads, in one-letter code: Putative thymidine phosphorylase (509 aa).

It belongs to the thymidine/pyrimidine-nucleoside phosphorylase family. Type 2 subfamily.

It carries out the reaction thymidine + phosphate = 2-deoxy-alpha-D-ribose 1-phosphate + thymine. The sequence is that of Putative thymidine phosphorylase from Chelativorans sp. (strain BNC1).